The following is a 664-amino-acid chain: Trifunctional UDP-glucose 4,6-dehydratase/UDP-4-keto-6-deoxy-D-glucose 3,5-epimerase/UDP-4-keto-L-rhamnose-reductase RHM3 (664 aa).

13-19 is a binding site for NAD(+); sequence GAAGFIA. Thr132 provides a ligand contact to substrate. The active-site Proton donor is Asp133. Catalysis depends on proton acceptor residues Glu134 and Tyr159. 386–392 lines the NADP(+) pocket; sequence GKTGWLG.

The protein in the N-terminal section; belongs to the NAD(P)-dependent epimerase/dehydratase family. dTDP-glucose dehydratase subfamily. It in the C-terminal section; belongs to the dTDP-4-dehydrorhamnose reductase family. NAD(+) serves as cofactor. NADP(+) is required as a cofactor. Expressed in roots, stems, seedlings, and siliques. Lower expression in inflorescence tips, and leaves.

The enzyme catalyses UDP-alpha-D-glucose = UDP-4-dehydro-6-deoxy-alpha-D-glucose + H2O. It functions in the pathway carbohydrate biosynthesis. Trifunctional enzyme involved in UDP-beta-L-rhamnose biosynthesis, a precursor of the primary cell wall components rhamnogalacturonan I (RG-I) and rhamnogalacturonan II (RG-II). Catalyzes the dehydration of UDP-glucose to form UDP-4-dehydro-6-deoxy-D-glucose followed by the epimerization of the C3' and C5' positions of UDP-4-dehydro-6-deoxy-D-glucose to form UDP-4-keto-beta-L-rhamnose and the reduction of UDP-4-keto-beta-L-rhamnose to yield UDP-beta-L-rhamnose. This is Trifunctional UDP-glucose 4,6-dehydratase/UDP-4-keto-6-deoxy-D-glucose 3,5-epimerase/UDP-4-keto-L-rhamnose-reductase RHM3 from Arabidopsis thaliana (Mouse-ear cress).